Consider the following 906-residue polypeptide: Cadherin-2 (906 aa).

Positions 1–25 (MCRIVGAPRTLLPLLAALLQASVEA) are cleaved as a signal peptide. A propeptide spanning residues 26-159 (SGGIALCKTG…HNGHLQRQKR (134 aa)) is cleaved from the precursor. Residues serine 96 and serine 135 each carry the phosphoserine modification. 5 consecutive Cadherin domains span residues 160-267 (DWVI…RPEF), 268-382 (LHQV…PPEF), 383-497 (TAMS…NPYF), 498-603 (APNP…DNAP), and 604-714 (QVVP…DVDR). At 160-724 (DWVIPPINLP…IVGAGLGTGA (565 aa)) the chain is on the extracellular side. Residue glutamate 170 participates in Ca(2+) binding. Asparagine 190 carries an N-linked (GlcNAc...) asparagine glycan. Aspartate 226, glutamate 228, aspartate 259, methionine 260, asparagine 261, aspartate 262, and asparagine 263 together coordinate Ca(2+). Asparagine 273 carries N-linked (GlcNAc...) asparagine glycosylation. Positions 293, 295, and 301 each coordinate Ca(2+). An N-linked (GlcNAc...) asparagine glycan is attached at asparagine 325. Aspartate 353 contacts Ca(2+). 5 N-linked (GlcNAc...) asparagine glycosylation sites follow: asparagine 402, asparagine 572, asparagine 622, asparagine 651, and asparagine 692. A helical transmembrane segment spans residues 725–745 (IIAILLCIIILLILVLMFVVW). Over 746-906 (MKRRDKERQA…LADMYGGGDD (161 aa)) the chain is Cytoplasmic. The span at 863–880 (SGSTAGSLSSLNSSSSGG) shows a compositional bias: low complexity. A disordered region spans residues 863–884 (SGSTAGSLSSLNSSSSGGEQDY).

Homodimer (via extracellular region). Can also form heterodimers with other cadherins (via extracellular region). Dimerization occurs in trans, i.e. with a cadherin chain from another cell. Interacts with CDCP1. Interacts with PCDH8; this complex may also include TAOK2. The interaction with PCDH8 may lead to internalization through TAOK2/p38 MAPK pathway. Identified in a complex containing FGFR4, NCAM1, CDH2, PLCG1, FRS2, SRC, SHC1, GAP43 and CTTN. May interact with OBSCN (via protein kinase domain 2). Interacts with FBXO45. Cleaved by MMP24. Ectodomain cleavage leads to the generation of a soluble 90 kDa N-terminal soluble fragment and a 45 kDa membrane-bound C-terminal fragment 1 (CTF1), which is further cleaved by gamma-secretase into a 35 kDa. Cleavage in neural stem cells by MMP24 affects CDH2-mediated anchorage of neural stem cells to ependymocytes in the adult subependymal zone, leading to modulate neural stem cell quiescence. Post-translationally, may be phosphorylated by OBSCN.

It is found in the cell membrane. The protein localises to the sarcolemma. Its subcellular location is the cell junction. The protein resides in the cell surface. It localises to the desmosome. It is found in the adherens junction. Its function is as follows. Calcium-dependent cell adhesion protein; preferentially mediates homotypic cell-cell adhesion by dimerization with a CDH2 chain from another cell. Cadherins may thus contribute to the sorting of heterogeneous cell types. Acts as a regulator of neural stem cells quiescence by mediating anchorage of neural stem cells to ependymocytes in the adult subependymal zone: upon cleavage by MMP24, CDH2-mediated anchorage is affected, leading to modulate neural stem cell quiescence. Plays a role in cell-to-cell junction formation between pancreatic beta cells and neural crest stem (NCS) cells, promoting the formation of processes by NCS cells. CDH2 may be involved in neuronal recognition mechanism. In hippocampal neurons, may regulate dendritic spine density. In Rhinolophus ferrumequinum (Greater horseshoe bat), this protein is Cadherin-2 (CDH2).